The chain runs to 303 residues: MSLILFACVVRVRDGLPLSASTDFYHSQDFLECRRRLKTLALRLAQYPGRGSAEGCDFSIHFSSSRDVACMAICSLQCPAAMAFCFLETLWWEFTASYDTTCVGLASRPYAFLEFDNVIQKVKWHFNYVSSTQMDSSLGKIQEELKFQPPVVLTLEDTDVANGVMNGHTLMHLEPAPSFRMEPVTALGILSLILNIMCAALNLIRGIHLAEHSLQVAHEEIGNILAFLIPFVACIFQCYLYLFYSPARTMKVVLMLLFICLGNVYLHGLRNLWQILFHIGVAFLSSHQILTRQLQDKQSDCGV.

Residues 1 to 183 (MSLILFACVV…EPAPSFRMEP (183 aa)) lie on the Cytoplasmic side of the membrane. The Longin domain occupies 8-119 (CVVRVRDGLP…YAFLEFDNVI (112 aa)). The chain crosses the membrane as a helical span at residues 184–204 (VTALGILSLILNIMCAALNLI). The Lumenal portion of the chain corresponds to 205–223 (RGIHLAEHSLQVAHEEIGN). Residues 224–244 (ILAFLIPFVACIFQCYLYLFY) form a helical membrane-spanning segment. The Cytoplasmic portion of the chain corresponds to 245-248 (SPAR). A helical membrane pass occupies residues 249–269 (TMKVVLMLLFICLGNVYLHGL). Residue Arg-270 is a topological domain, lumenal. Residues 271 to 291 (NLWQILFHIGVAFLSSHQILT) traverse the membrane as a helical segment. The Cytoplasmic portion of the chain corresponds to 292 to 303 (RQLQDKQSDCGV).

Belongs to the synaptobrevin family.

Its subcellular location is the endoplasmic reticulum membrane. Its function is as follows. May be involved in vesicle transport between the ER and the Golgi complex. The sequence is that of Vesicle-trafficking protein SEC22c (SEC22C) from Bos taurus (Bovine).